The sequence spans 153 residues: Ribosome maturation factor RimP (153 aa).

The protein belongs to the RimP family.

The protein resides in the cytoplasm. Its function is as follows. Required for maturation of 30S ribosomal subunits. The polypeptide is Ribosome maturation factor RimP (Marinobacter nauticus (strain ATCC 700491 / DSM 11845 / VT8) (Marinobacter aquaeolei)).